The sequence spans 378 residues: Biotin synthase (378 aa).

Residues 68-292 (NEVQISTLLS…IAVTRICCPS (225 aa)) enclose the Radical SAM core domain. The [4Fe-4S] cluster site is built by C83, C87, and C90. [2Fe-2S] cluster-binding residues include C129, C160, C220, and R296.

The protein belongs to the radical SAM superfamily. Biotin synthase family. As to quaternary structure, homodimer. [4Fe-4S] cluster serves as cofactor. [2Fe-2S] cluster is required as a cofactor.

The enzyme catalyses (4R,5S)-dethiobiotin + (sulfur carrier)-SH + 2 reduced [2Fe-2S]-[ferredoxin] + 2 S-adenosyl-L-methionine = (sulfur carrier)-H + biotin + 2 5'-deoxyadenosine + 2 L-methionine + 2 oxidized [2Fe-2S]-[ferredoxin]. Its pathway is cofactor biosynthesis; biotin biosynthesis; biotin from 7,8-diaminononanoate: step 2/2. Catalyzes the conversion of dethiobiotin (DTB) to biotin by the insertion of a sulfur atom into dethiobiotin via a radical-based mechanism. The polypeptide is Biotin synthase (Psychrobacter arcticus (strain DSM 17307 / VKM B-2377 / 273-4)).